Consider the following 1874-residue polypeptide: WD repeat-containing protein 90 (1874 aa).

The tract at residues methionine 1 to proline 59 is disordered. A phosphoserine mark is found at serine 16 and serine 20. The binds with microtubules stretch occupies residues proline 59–phenylalanine 267. Serine 301 bears the Phosphoserine mark. 10 WD repeats span residues glycine 469–arginine 512, proline 514–glutamate 556, valine 563–cysteine 603, serine 677–glutamate 716, glutamate 718–leucine 757, serine 760–aspartate 799, arginine 844–leucine 883, asparagine 944–glutamate 984, valine 988–cysteine 1026, and glycine 1031–glycine 1068. A compositionally biased stretch (basic and acidic residues) spans arginine 1066–proline 1075. Disordered stretches follow at residues arginine 1066–glutamate 1132 and alanine 1160–proline 1211. WD repeat units follow at residues glycine 1280 to leucine 1325, histidine 1328 to serine 1369, arginine 1371 to glutamine 1412, leucine 1422 to alanine 1460, glutamate 1462 to arginine 1500, glycine 1559 to glutamine 1598, valine 1601 to lysine 1646, proline 1649 to valine 1688, alanine 1695 to glutamate 1740, proline 1800 to leucine 1839, and glycine 1841 to proline 1874.

The protein belongs to the WD repeat WDR90/POC16 family.

The protein resides in the cytoplasm. Its subcellular location is the cytoskeleton. It is found in the microtubule organizing center. The protein localises to the centrosome. It localises to the centriole. The protein resides in the centriolar satellite. Functionally, microtubule-binding protein that plays a crucial role in ensuring inner core protein localization within the centriole core, as well as in maintaining the microtubule wall integrity and the overall centriole roundness and stability. Required for efficient primary cilium formation. The protein is WD repeat-containing protein 90 (Wdr90) of Mus musculus (Mouse).